The following is a 396-amino-acid chain: NADH-quinone oxidoreductase subunit D (396 aa).

It belongs to the complex I 49 kDa subunit family. As to quaternary structure, NDH-1 is composed of 14 different subunits. Subunits NuoB, C, D, E, F, and G constitute the peripheral sector of the complex.

It is found in the cell inner membrane. The catalysed reaction is a quinone + NADH + 5 H(+)(in) = a quinol + NAD(+) + 4 H(+)(out). Functionally, NDH-1 shuttles electrons from NADH, via FMN and iron-sulfur (Fe-S) centers, to quinones in the respiratory chain. The immediate electron acceptor for the enzyme in this species is believed to be ubiquinone. Couples the redox reaction to proton translocation (for every two electrons transferred, four hydrogen ions are translocated across the cytoplasmic membrane), and thus conserves the redox energy in a proton gradient. This is NADH-quinone oxidoreductase subunit D from Methylorubrum extorquens (strain PA1) (Methylobacterium extorquens).